Here is a 173-residue protein sequence, read N- to C-terminus: Large ribosomal subunit protein uL10 (173 aa).

This sequence belongs to the universal ribosomal protein uL10 family. As to quaternary structure, part of the ribosomal stalk of the 50S ribosomal subunit. The N-terminus interacts with L11 and the large rRNA to form the base of the stalk. The C-terminus forms an elongated spine to which L12 dimers bind in a sequential fashion forming a multimeric L10(L12)X complex.

In terms of biological role, forms part of the ribosomal stalk, playing a central role in the interaction of the ribosome with GTP-bound translation factors. In Chlorobaculum tepidum (strain ATCC 49652 / DSM 12025 / NBRC 103806 / TLS) (Chlorobium tepidum), this protein is Large ribosomal subunit protein uL10.